A 506-amino-acid polypeptide reads, in one-letter code: Xaa-Pro aminopeptidase 3 (506 aa).

A mitochondrion-targeting transit peptide spans 1–31; it reads MPSLLSTPKLAPVLARLRGLSGCMSCLQRRY. The interval 54–79 is interaction with TNFRSF1B; that stretch reads HPHLLRPGEVTPGLSQVEYALRRHKL. Residues Tyr300, Asp331, Asp342, His423, His430, Glu450, and Glu474 each coordinate substrate. The Mn(2+) site is built by Asp331, Asp342, and His423. The Mn(2+) site is built by Glu450 and Glu474.

Belongs to the peptidase M24B family. As to quaternary structure, homodimer. Interacts with TNFRSF1B/TNFR2 (activated) and TRAF2. Mn(2+) serves as cofactor. In terms of tissue distribution, expressed in brain, kidney, heart, liver, skeletal muscle and testis.

It is found in the mitochondrion. Its subcellular location is the cytoplasm. The catalysed reaction is Release of any N-terminal amino acid, including proline, that is linked to proline, even from a dipeptide or tripeptide.. Functionally, catalyzes the removal of a penultimate prolyl residue from the N-termini of peptides, such as Leu-Pro-Ala. Also shows low activity towards peptides with Ala or Ser at the P1 position. Promotes TNFRSF1B-mediated phosphorylation of MAPK8/JNK1 and MAPK9/JNK2, suggesting a function as an adapter protein for TNFRSF1B; the effect is independent of XPNPEP3 peptidase activity. May inhibit apoptotic cell death induced via TNF-TNFRSF1B signaling. The sequence is that of Xaa-Pro aminopeptidase 3 (Xpnpep3) from Mus musculus (Mouse).